The sequence spans 642 residues: Threonine--tRNA ligase (642 aa).

The TGS domain occupies 1-61 (MPVITLPDGS…ETDATLSIIT (61 aa)). The interval 243 to 534 (DHRKIGKQLD…LTEETAGYFP (292 aa)) is catalytic. C334, H385, and H511 together coordinate Zn(2+).

Belongs to the class-II aminoacyl-tRNA synthetase family. Homodimer. It depends on Zn(2+) as a cofactor.

Its subcellular location is the cytoplasm. The enzyme catalyses tRNA(Thr) + L-threonine + ATP = L-threonyl-tRNA(Thr) + AMP + diphosphate + H(+). Functionally, catalyzes the attachment of threonine to tRNA(Thr) in a two-step reaction: L-threonine is first activated by ATP to form Thr-AMP and then transferred to the acceptor end of tRNA(Thr). Also edits incorrectly charged L-seryl-tRNA(Thr). This is Threonine--tRNA ligase from Tolumonas auensis (strain DSM 9187 / NBRC 110442 / TA 4).